We begin with the raw amino-acid sequence, 317 residues long: Homoserine O-succinyltransferase (317 aa).

Residue Cys142 is the Acyl-thioester intermediate of the active site. Substrate is bound by residues Lys163 and Ser192. Residue His235 is the Proton acceptor of the active site. Residue Glu237 is part of the active site. Arg249 contacts substrate.

It belongs to the MetA family.

It localises to the cytoplasm. The catalysed reaction is L-homoserine + succinyl-CoA = O-succinyl-L-homoserine + CoA. It functions in the pathway amino-acid biosynthesis; L-methionine biosynthesis via de novo pathway; O-succinyl-L-homoserine from L-homoserine: step 1/1. Functionally, transfers a succinyl group from succinyl-CoA to L-homoserine, forming succinyl-L-homoserine. This Aeromonas hydrophila subsp. hydrophila (strain ATCC 7966 / DSM 30187 / BCRC 13018 / CCUG 14551 / JCM 1027 / KCTC 2358 / NCIMB 9240 / NCTC 8049) protein is Homoserine O-succinyltransferase.